A 401-amino-acid chain; its full sequence is Alpha-(1,4)-fucosyltransferase (401 aa).

Residues 1-4 (MPMR) lie on the Cytoplasmic side of the membrane. A helical; Signal-anchor for type II membrane protein transmembrane segment spans residues 5 to 27 (YLNAMAALLMMFFTLLILSFTGI). The Lumenal segment spans residues 28–401 (LEFPSASTSM…SRRGGKNAGV (374 aa)). Asn-85 carries an N-linked (GlcNAc...) asparagine glycan.

Belongs to the glycosyltransferase 10 family. In terms of tissue distribution, present in root, stem, flower buds and green siliques.

The protein localises to the golgi apparatus. It localises to the golgi stack membrane. Its pathway is protein modification; protein glycosylation. In terms of biological role, may be involved in cell wall synthesis. Catalyzes alpha-1,4 glycosidic linkages and generates Lewis-a epitopes. In Arabidopsis thaliana (Mouse-ear cress), this protein is Alpha-(1,4)-fucosyltransferase (FUT13).